Consider the following 211-residue polypeptide: MFISFEGIDASGKSTVMDLFAKYLKIKFPEKEIVTTFEPGGKNLKEALQIREFLLSKNNQISPYVEMLLFATARRIHLERLIWPALKAGKIVLCDRYIDSSIAYQGFGNGLDIDLVTSLNSLISENTFPDLTIFLDIKISKAFERMGIFRDHNRDRLENRGVEFYEKVINGYEFLAKKNKNFFKIDGNGTYDEVLDLIIDFFEKYYASWPK.

An ATP-binding site is contributed by 7-14 (GIDASGKS).

The protein belongs to the thymidylate kinase family.

The catalysed reaction is dTMP + ATP = dTDP + ADP. Functionally, phosphorylation of dTMP to form dTDP in both de novo and salvage pathways of dTTP synthesis. The sequence is that of Thymidylate kinase from Mesomycoplasma hyopneumoniae (strain 232) (Mycoplasma hyopneumoniae).